A 358-amino-acid polypeptide reads, in one-letter code: Trace amine-associated receptor 7c (358 aa).

Residues 1-47 lie on the Extracellular side of the membrane; sequence MATDDDSFPWDQDSILSRDLLSASSLQLCYENLNRSCVRSPYSPGSR. N34 carries an N-linked (GlcNAc...) asparagine glycan. Cystine bridges form between C37/C201 and C120/C205. A helical transmembrane segment spans residues 48–68; it reads LILYAVFGFGAVLAVCGNLLV. Topologically, residues 69-83 are cytoplasmic; that stretch reads MTSILHFRQLHSPAN. Residues 84–104 form a helical membrane-spanning segment; sequence FLVASLACADLLVGLTVMPFS. The Extracellular portion of the chain corresponds to 105–125; it reads MVRSVEGCWYFGNTYCKFHSC. Residues 126 to 148 traverse the membrane as a helical segment; it reads FEGSFCYSSLFHLCFISLDRYIA. The Cytoplasmic portion of the chain corresponds to 149–166; the sequence is VSDPLIYPTRFTASISGK. Residues 167-187 form a helical membrane-spanning segment; sequence CITFSWLLSIIYSFSLLYTGA. Over 188 to 211 the chain is Extracellular; it reads NEAGLEDLVSALTCVGGCQVAVNQ. Residues 212-232 traverse the membrane as a helical segment; sequence SWVFINFLLFLVPALVMMTVY. Residues 233 to 274 lie on the Cytoplasmic side of the membrane; sequence SKIFLIAKQQAQNIEKMSKQTARASESYKDRVAKRERKAAKT. A helical transmembrane segment spans residues 275–295; sequence LGIAVAAFLLSWLPYFIDSII. The Extracellular portion of the chain corresponds to 296-309; it reads DAFLGFITPTYMYE. Residues 310–332 traverse the membrane as a helical segment; the sequence is ILVWIVYYNSAMNPLIYAFFYPW. Residues 333 to 358 lie on the Cytoplasmic side of the membrane; that stretch reads FRKAIKLIVTGKILRENSSTINLFPE.

It belongs to the G-protein coupled receptor 1 family.

Its subcellular location is the cell membrane. Functionally, olfactory receptor specific for N,N-dimethylalkylamines trace amines. Trace amine compounds are enriched in animal body fluids and act on trace amine-associated receptors (TAARs) to elicit both intraspecific and interspecific innate behaviors. Ligand-binding causes a conformation change that triggers signaling via G(s)-class of G alpha proteins (GNAL or GNAS). In Rattus norvegicus (Rat), this protein is Trace amine-associated receptor 7c.